The primary structure comprises 403 residues: Phosphoglycerate kinase (403 aa).

Substrate is bound by residues 21–23, Arg36, 59–62, Arg119, and Arg159; these read DFN and HLGR. ATP contacts are provided by residues Lys214, Gly301, Glu332, and 359 to 362; that span reads GGDS.

The protein belongs to the phosphoglycerate kinase family. As to quaternary structure, monomer.

It is found in the cytoplasm. It catalyses the reaction (2R)-3-phosphoglycerate + ATP = (2R)-3-phospho-glyceroyl phosphate + ADP. The protein operates within carbohydrate degradation; glycolysis; pyruvate from D-glyceraldehyde 3-phosphate: step 2/5. In Lactobacillus johnsonii (strain CNCM I-12250 / La1 / NCC 533), this protein is Phosphoglycerate kinase.